Consider the following 511-residue polypeptide: Glucans biosynthesis protein G (511 aa).

The N-terminal stretch at M1–A22 is a signal peptide.

This sequence belongs to the OpgD/OpgG family.

The protein resides in the periplasm. Its pathway is glycan metabolism; osmoregulated periplasmic glucan (OPG) biosynthesis. In terms of biological role, involved in the biosynthesis of osmoregulated periplasmic glucans (OPGs). The protein is Glucans biosynthesis protein G of Salmonella enteritidis PT4 (strain P125109).